The chain runs to 321 residues: MASSSFSIVVVALGVLALFAGSSSAQLSTNFYSKTCPKVFDTVKSGVQSAVSKERRMGASLLRLFFHDCFVNGCDASVLLDDTSSFTGEQTAVPNKNSIRGLNVIDNIKSQVESVCPGVVSCADIIAIAARDSVVILGGPDWDVKLGRRDSKTASLSGANNNIPPPTSSLSNLISKFQAQGLSTRDMVALSGAHTIGQARCTSFRARIYNETNIDSSFAKTRQASCPSASGSGDNNLAPLDLQTPTTFDNYYYKNLINQKGLLHSDQVLYNGGSTDSTVKTYVNNPKTFTSDFVAGMIKMGDITPLTGSEGEIRKSCGKVN.

An N-terminal signal peptide occupies residues 1-25 (MASSSFSIVVVALGVLALFAGSSSA). Glutamine 26 carries the pyrrolidone carboxylic acid modification. 4 cysteine pairs are disulfide-bonded: cysteine 36/cysteine 116, cysteine 69/cysteine 74, cysteine 122/cysteine 317, and cysteine 201/cysteine 226. Histidine 67 (proton acceptor) is an active-site residue. The Ca(2+) site is built by aspartate 68, valine 71, glycine 73, aspartate 75, and serine 77. Proline 164 lines the substrate pocket. Histidine 194 contributes to the heme b binding site. Threonine 195 serves as a coordination point for Ca(2+). N-linked (GlcNAc...) asparagine glycosylation is present at asparagine 210. Ca(2+) is bound by residues aspartate 241, threonine 244, and aspartate 249.

The protein belongs to the peroxidase family. Classical plant (class III) peroxidase subfamily. Requires heme b as cofactor. It depends on Ca(2+) as a cofactor.

Its subcellular location is the secreted. It catalyses the reaction 2 a phenolic donor + H2O2 = 2 a phenolic radical donor + 2 H2O. Removal of H(2)O(2), oxidation of toxic reductants, biosynthesis and degradation of lignin, suberization, auxin catabolism, response to environmental stresses such as wounding, pathogen attack and oxidative stress. These functions might be dependent on each isozyme/isoform in each plant tissue. The sequence is that of Peroxidase 4 from Vitis vinifera (Grape).